Here is a 310-residue protein sequence, read N- to C-terminus: Beta-ketoacyl-[acyl-carrier-protein] synthase III 1 (310 aa).

Active-site residues include cysteine 112 and histidine 235. The tract at residues glutamine 236–arginine 240 is ACP-binding. Asparagine 265 is a catalytic residue.

Belongs to the thiolase-like superfamily. FabH family. In terms of assembly, homodimer.

The protein resides in the cytoplasm. The enzyme catalyses malonyl-[ACP] + acetyl-CoA + H(+) = 3-oxobutanoyl-[ACP] + CO2 + CoA. It functions in the pathway lipid metabolism; fatty acid biosynthesis. Its function is as follows. Catalyzes the condensation reaction of fatty acid synthesis by the addition to an acyl acceptor of two carbons from malonyl-ACP. Catalyzes the first condensation reaction which initiates fatty acid synthesis and may therefore play a role in governing the total rate of fatty acid production. Possesses both acetoacetyl-ACP synthase and acetyl transacylase activities. Its substrate specificity determines the biosynthesis of branched-chain and/or straight-chain of fatty acids. This chain is Beta-ketoacyl-[acyl-carrier-protein] synthase III 1, found in Bacillus cereus (strain ATCC 14579 / DSM 31 / CCUG 7414 / JCM 2152 / NBRC 15305 / NCIMB 9373 / NCTC 2599 / NRRL B-3711).